A 132-amino-acid chain; its full sequence is Histone H2A.1 (132 aa).

An N-acetylserine modification is found at S2. N6-acetyllysine occurs at positions 5 and 8. N6-succinyllysine occurs at positions 14 and 22. Q106 is subject to N5-methylglutamine. N6-malonyllysine; alternate is present on K120. K127 participates in a covalent cross-link: Glycyl lysine isopeptide (Lys-Gly) (interchain with G-Cter in SUMO). S129 is subject to Phosphoserine. The short motif at 129–130 (SQ) is the [ST]-Q motif element.

The protein belongs to the histone H2A family. In terms of assembly, the nucleosome is a histone octamer containing two molecules each of H2A, H2B, H3 and H4 assembled in one H3-H4 heterotetramer and two H2A-H2B heterodimers. The octamer wraps approximately 147 bp of DNA. Phosphorylated to form H2AS128ph (gamma-H2A) in response to DNA double-strand breaks (DSBs) generated by exogenous genotoxic agents and by stalled replication forks. Phosphorylation is dependent on the DNA damage checkpoint kinases MEC1/ATR and TEL1/ATM, spreads on either side of a detected DSB site and may mark the surrounding chromatin for recruitment of proteins required for DNA damage signaling and repair. Gamma-H2A interacts with ARP4, a shared component of the NuA4 histone acetyltransferase complex and the INO80 and SWR1 chromatin remodeling complexes, and serves to recruit first NuA4, mediating histone H4 acetylation, and subsequently the INO80/SWR1 complexes, facilitating DNA resection, to DSB sites. Gamma-H2A is required for sequestering cohesin around the break site, which is important for efficient post-replicative double-strand break repair by homologous recombination, holding the damaged chromatid close to its undamaged sister template. Gamma-H2A is removed from the DNA prior to the strand invasion-primer extension step of the repair process and subsequently dephosphorylated by PPH3, a component of the histone H2A phosphatase complex (HTP-C). Dephosphorylation is necessary for efficient recovery from the DNA damage checkpoint. In terms of processing, N-acetylated by NAT4. Post-translationally, acetylated by ESA1, a component of the NuA4 histone acetyltransferase (HAT) complex, to form H2AK4ac and H2AK7ac. Glutamine methylation at Gln-106 (H2AQ105me) by NOP1 is specifically dedicated to polymerase I. It is present at 35S ribosomal DNA locus and impairs binding of the FACT complex. In terms of processing, sumoylated to from H2AK126su. May lead to transcriptional repression.

It localises to the nucleus. It is found in the chromosome. Its function is as follows. Core component of nucleosome which plays a central role in DNA double strand break (DSB) repair. Nucleosomes wrap and compact DNA into chromatin, limiting DNA accessibility to the cellular machineries which require DNA as a template. Histones thereby play a central role in transcription regulation, DNA repair, DNA replication and chromosomal stability. DNA accessibility is regulated via a complex set of post-translational modifications of histones, also called histone code, and nucleosome remodeling. The sequence is that of Histone H2A.1 (HTA1) from Saccharomyces cerevisiae (strain ATCC 204508 / S288c) (Baker's yeast).